The following is a 322-amino-acid chain: Lung adenoma susceptibility protein 2 homolog (322 aa).

Residues 1-31 (MAKSKTKHRLCSRESSVSSLLASCSLSDSNS) form the signal peptide. Positions 148 to 157 (TNKKNKKCHG) are enriched in basic residues. Disordered regions lie at residues 148-175 (TNKK…GPST) and 228-248 (FKSP…RAKS). At S161 the chain carries Phosphoserine. A compositionally biased stretch (polar residues) spans 236–247 (SDDSPQQTSRAK).

The protein resides in the secreted. Functionally, might play a role in cell proliferation. The chain is Lung adenoma susceptibility protein 2 homolog (LAS2) from Macaca fascicularis (Crab-eating macaque).